A 109-amino-acid chain; its full sequence is Putative gametogenetin-binding protein 1 (109 aa).

Residues Lys24–Glu109 form an interaction with GGN region.

Interacts with CCDC159. Interacts with GGN.

It is found in the cytoplasm. The protein localises to the membrane. Its subcellular location is the golgi apparatus. May be involved in spermatogenesis. The sequence is that of Putative gametogenetin-binding protein 1 (GGNBP1) from Homo sapiens (Human).